We begin with the raw amino-acid sequence, 404 residues long: MTEVTELSRPEGEALNTREVLLNLGPQHPSTHGVLRLVLELDGEFVERVDPHIGYLHRGTEKLAESFTYTQIFPLTDRLDYLCPPSNNLAFALAVEKLLGIEAPIRAQYIRVMMAELARISGHLLITGALPMDLGAMTALLYVMREREMIMDLLEMITGARMHTSFCRVGGVREDLPDGFFPKIREFCDIFPNRIRDYERLLEDNRVFLNRTKGIGVISAEDAVDLGLSGPNLRASGVDWDIRRDEPYEIYDRLDFNVITRDEGDCYARWRCRVDEMRESMRIIEQCIDQMPEGPFQIDMPTIAFPLDKDRVHCSMEALIQHFDLSAYGFKVPKGEVYSAIEAPKGELGFYIISDGSPKPFRMKVRAPSFVNLQALFGVTNARYLADMIAVLGSLDPVMAEVDK.

The protein belongs to the complex I 49 kDa subunit family. As to quaternary structure, NDH-1 is composed of 14 different subunits. Subunits NuoB, C, D, E, F, and G constitute the peripheral sector of the complex.

The protein localises to the cell inner membrane. It catalyses the reaction a quinone + NADH + 5 H(+)(in) = a quinol + NAD(+) + 4 H(+)(out). Its function is as follows. NDH-1 shuttles electrons from NADH, via FMN and iron-sulfur (Fe-S) centers, to quinones in the respiratory chain. The immediate electron acceptor for the enzyme in this species is believed to be ubiquinone. Couples the redox reaction to proton translocation (for every two electrons transferred, four hydrogen ions are translocated across the cytoplasmic membrane), and thus conserves the redox energy in a proton gradient. This is NADH-quinone oxidoreductase subunit D 2 from Rhizobium etli (strain ATCC 51251 / DSM 11541 / JCM 21823 / NBRC 15573 / CFN 42).